The primary structure comprises 258 residues: 6-phosphogluconolactonase (258 aa).

N-acetylalanine is present on Ala2. Ser49 bears the Phosphoserine mark. Lys180 bears the N6-acetyllysine mark.

Belongs to the glucosamine/galactosamine-6-phosphate isomerase family. 6-phosphogluconolactonase subfamily.

Its subcellular location is the cytoplasm. The catalysed reaction is 6-phospho-D-glucono-1,5-lactone + H2O = 6-phospho-D-gluconate + H(+). Its pathway is carbohydrate degradation; pentose phosphate pathway; D-ribulose 5-phosphate from D-glucose 6-phosphate (oxidative stage): step 2/3. In terms of biological role, hydrolysis of 6-phosphogluconolactone to 6-phosphogluconate. The polypeptide is 6-phosphogluconolactonase (Homo sapiens (Human)).